Reading from the N-terminus, the 151-residue chain is S-protein homolog 1 (151 aa).

Positions 1 to 18 are cleaved as a signal peptide; that stretch reads MNCIKQFLLAICFSLALT.

This sequence belongs to the plant self-incompatibility (S1) protein family. Restricted to floral tissues.

Its subcellular location is the secreted. This is S-protein homolog 1 from Arabidopsis thaliana (Mouse-ear cress).